A 299-amino-acid chain; its full sequence is uncharacterized protein (299 aa).

Residues 1 to 10 show a composition bias toward polar residues; sequence MTSIIQSPPL. Disordered regions lie at residues 1 to 30, 54 to 89, and 148 to 212; these read MTSI…NNNN, KLNN…INNN, and QDYT…SDYV. A compositionally biased stretch (low complexity) spans 56 to 89; it reads NNNNNNNNNNNNNNNNNNNNNNNNSSSNNNINNN. Acidic residues-rich tracts occupy residues 150–169 and 177–212; these read YTDE…DEEE and ECEE…SDYV.

This is an uncharacterized protein from Dictyostelium discoideum (Social amoeba).